The sequence spans 271 residues: 2-amino-3,7-dideoxy-D-threo-hept-6-ulosonate synthase (271 aa).

Aspartate 33 serves as the catalytic Proton acceptor. 1-deoxy-D-threo-hexo-2,5-diulose 6-phosphate contacts are provided by residues 33-37 (DHGVS) and 153-155 (YPR). The active-site Proton donor is the tyrosine 153. Lysine 184 acts as the Schiff-base intermediate with substrate in catalysis. 1-deoxy-D-threo-hexo-2,5-diulose 6-phosphate-binding positions include 209–210 (GG) and 236–237 (GR).

It belongs to the DeoC/FbaB aldolase family. ADHS subfamily. As to quaternary structure, homodecamer.

The enzyme catalyses 1-deoxy-D-threo-hexo-2,5-diulose 6-phosphate + L-aspartate 4-semialdehyde = 2,3-dioxopropyl phosphate + 2-amino-2,3,7-trideoxy-D-lyxo-hept-6-ulosonate. Catalyzes a transaldol reaction between 6-deoxy-5-ketofructose 1-phosphate (DKFP) and L-aspartate semialdehyde (ASA) with an elimination of hydroxypyruvaldehyde phosphate to yield 2-amino-3,7-dideoxy-D-threo-hept-6-ulosonate (ADH). Plays a key role in an alternative pathway of the biosynthesis of 3-dehydroquinate (DHQ), which is involved in the canonical pathway for the biosynthesis of aromatic amino acids. The sequence is that of 2-amino-3,7-dideoxy-D-threo-hept-6-ulosonate synthase from Methanococcus aeolicus (strain ATCC BAA-1280 / DSM 17508 / OCM 812 / Nankai-3).